The following is a 2690-amino-acid chain: Probable polyketide synthase 28 (2690 aa).

In terms of domain architecture, Ketosynthase family 3 (KS3) spans 15–443 (YGDVAVIGIG…GSNVCLILSE (429 aa)). Active-site for beta-ketoacyl synthase activity residues include C187, H326, and H366. The segment at 651-684 (GVSADIIVGHSLGELSSSYSSGMIDFETLCHLIY) is acyl/malonyl transferases. Residue S661 is the For acyl/malonyl transferase activity of the active site. Residues 906 to 934 (NFKSQLTNINNNNNNINNNNNNNNNNNNN) adopt a coiled-coil conformation. The disordered stretch occupies residues 916-946 (NNNNNINNNNNNNNNNNNNNNNNNNNNNNNN). An N-terminal hotdog fold region spans residues 973 to 1102 (HEKITNEGPS…GNFSLFKHNS (130 aa)). The region spanning 973–1285 (HEKITNEGPS…CSSVSLANPS (313 aa)) is the PKS/mFAS DH domain. H1014 serves as the catalytic Proton acceptor; for dehydratase activity. The segment at 1119 to 1285 (NFTTISKHDF…CSSVSLANPS (167 aa)) is C-terminal hotdog fold. D1188 acts as the Proton donor; for dehydratase activity in catalysis. The interval 1401 to 1429 (LNHHNNSENKNKNNNNNNNSNNNENSNNE) is disordered. A compositionally biased stretch (low complexity) spans 1412-1429 (KNNNNNNNSNNNENSNNE). The Carrier domain maps to 2594–2671 (SDNEFIHSTI…QSIDIIKFGY (78 aa)). S2631 is modified (O-(pantetheine 4'-phosphoryl)serine).

Pantetheine 4'-phosphate is required as a cofactor.

Probable polyketide synthase. This is Probable polyketide synthase 28 (pks28) from Dictyostelium discoideum (Social amoeba).